We begin with the raw amino-acid sequence, 245 residues long: Small ribosomal subunit protein uS3 (245 aa).

The 70-residue stretch at 39 to 108 (IRNYIKKNYY…SVFVNVQEVK (70 aa)) folds into the KH type-2 domain.

This sequence belongs to the universal ribosomal protein uS3 family. As to quaternary structure, part of the 30S ribosomal subunit. Forms a tight complex with proteins S10 and S14.

Binds the lower part of the 30S subunit head. Binds mRNA in the 70S ribosome, positioning it for translation. The sequence is that of Small ribosomal subunit protein uS3 from Dictyoglomus turgidum (strain DSM 6724 / Z-1310).